A 195-amino-acid chain; its full sequence is 3-hydroxyanthranilate 3,4-dioxygenase (195 aa).

Arginine 50 is a binding site for O2. Residues histidine 54, glutamate 60, and histidine 102 each coordinate Fe cation. Glutamate 60 is a substrate binding site. Substrate is bound by residues arginine 106 and glutamate 116. Residues cysteine 131, cysteine 136, cysteine 170, and cysteine 173 each coordinate a divalent metal cation.

The protein belongs to the 3-HAO family. Requires Fe(2+) as cofactor.

The protein localises to the cytoplasm. The catalysed reaction is 3-hydroxyanthranilate + O2 = (2Z,4Z)-2-amino-3-carboxymuconate 6-semialdehyde. The protein operates within cofactor biosynthesis; NAD(+) biosynthesis; quinolinate from L-kynurenine: step 3/3. Catalyzes the oxidative ring opening of 3-hydroxyanthranilate to 2-amino-3-carboxymuconate semialdehyde, which spontaneously cyclizes to quinolinate. This is 3-hydroxyanthranilate 3,4-dioxygenase (bna1) from Aspergillus terreus (strain NIH 2624 / FGSC A1156).